The chain runs to 62 residues: Large ribosomal subunit protein bL28 (62 aa).

The interval M1–S24 is disordered. Positions A14–S24 are enriched in polar residues.

The protein belongs to the bacterial ribosomal protein bL28 family.

The chain is Large ribosomal subunit protein bL28 from Bacillus pumilus (strain SAFR-032).